The following is a 483-amino-acid chain: Glutamyl-tRNA(Gln) amidotransferase subunit A (483 aa).

Active-site charge relay system residues include lysine 76 and serine 151. Residue serine 175 is the Acyl-ester intermediate of the active site.

Belongs to the amidase family. GatA subfamily. As to quaternary structure, heterotrimer of A, B and C subunits.

It carries out the reaction L-glutamyl-tRNA(Gln) + L-glutamine + ATP + H2O = L-glutaminyl-tRNA(Gln) + L-glutamate + ADP + phosphate + H(+). In terms of biological role, allows the formation of correctly charged Gln-tRNA(Gln) through the transamidation of misacylated Glu-tRNA(Gln) in organisms which lack glutaminyl-tRNA synthetase. The reaction takes place in the presence of glutamine and ATP through an activated gamma-phospho-Glu-tRNA(Gln). The polypeptide is Glutamyl-tRNA(Gln) amidotransferase subunit A (Pseudomonas entomophila (strain L48)).